Here is a 52-residue protein sequence, read N- to C-terminus: Protein PROPEP914 (52 aa).

Residues 25-52 (DKPQDDMPQTPNSQVTIVSRDHPRGGNY) are disordered. Over residues 31–41 (MPQTPNSQVTI) the composition is skewed to polar residues. Positions 43 to 52 (SRDHPRGGNY) are enriched in basic and acidic residues.

In terms of tissue distribution, expressed in roots. Barely detected in flowers.

Its function is as follows. Produces a rapid alkalinization of the cellular media and the induction of defense-related genes, including chitinase 1b, chalcone synthase and CYP93A1. Not active in tobacco or Arabidopsis. The receptor for GmPep914 is probably different from the receptor for GmSubPep. In Glycine max (Soybean), this protein is Protein PROPEP914 (PROPEP914).